A 142-amino-acid polypeptide reads, in one-letter code: Nucleoside diphosphate kinase (142 aa).

Residues Lys11, Phe59, Arg87, Thr93, Arg104, and Asn114 each coordinate ATP. The active-site Pros-phosphohistidine intermediate is the His117.

This sequence belongs to the NDK family. As to quaternary structure, homotetramer. It depends on Mg(2+) as a cofactor.

Its subcellular location is the cytoplasm. It catalyses the reaction a 2'-deoxyribonucleoside 5'-diphosphate + ATP = a 2'-deoxyribonucleoside 5'-triphosphate + ADP. The enzyme catalyses a ribonucleoside 5'-diphosphate + ATP = a ribonucleoside 5'-triphosphate + ADP. Major role in the synthesis of nucleoside triphosphates other than ATP. The ATP gamma phosphate is transferred to the NDP beta phosphate via a ping-pong mechanism, using a phosphorylated active-site intermediate. The sequence is that of Nucleoside diphosphate kinase from Aeromonas hydrophila subsp. hydrophila (strain ATCC 7966 / DSM 30187 / BCRC 13018 / CCUG 14551 / JCM 1027 / KCTC 2358 / NCIMB 9240 / NCTC 8049).